A 432-amino-acid polypeptide reads, in one-letter code: MANNVVVLGTQWGDEGKGKIVDLLTEDAKYVVRYQGGHNAGHTLVIDGEKTVLHLIPSGILRNNVKCIIGNGVVLSPDALMKEMGPLEARGIPVRERLFLSEACPLILPYHIALDQAREIARGKKAIGTTGRGIGPAYEDKVARRGLRVGDLFDKEAFAEKLKEVMAYHNFQLEHYYNAEPVSYDEVLASVMAQADVLTAMVIDVTQELDDARKRGDKIMFEGAQGTLLDIDHGTYPYVTSSNTTAGGVAAGSGFGPRHLGYILGIAKAYCTRVGAGPFPTELDDAVGEHLGVKGNEFGATTGRKRRCGWFDAVAMRRAVQINSISGFCLTKLDVMDGLKEIKICTGYKTQDGKTLSVSPMAADAYENLELIYETMPGWSENTFGAKTLDALPQAALDYIARIEELTGVPIDIVSTGPDRNETIIKVHPYGE.

GTP contacts are provided by residues 13–19 and 41–43; these read GDEGKGK and GHT. Aspartate 14 (proton acceptor) is an active-site residue. Mg(2+) contacts are provided by aspartate 14 and glycine 41. IMP is bound by residues 14–17, 39–42, threonine 130, arginine 144, glutamine 225, threonine 240, and arginine 304; these read DEGK and NAGH. Histidine 42 serves as the catalytic Proton donor. 300-306 serves as a coordination point for substrate; sequence ATTGRKR. GTP-binding positions include arginine 306, 332 to 334, and 415 to 417; these read KLD and STG.

This sequence belongs to the adenylosuccinate synthetase family. As to quaternary structure, homodimer. Mg(2+) is required as a cofactor.

It is found in the cytoplasm. It carries out the reaction IMP + L-aspartate + GTP = N(6)-(1,2-dicarboxyethyl)-AMP + GDP + phosphate + 2 H(+). Its pathway is purine metabolism; AMP biosynthesis via de novo pathway; AMP from IMP: step 1/2. Functionally, plays an important role in the de novo pathway of purine nucleotide biosynthesis. Catalyzes the first committed step in the biosynthesis of AMP from IMP. The polypeptide is Adenylosuccinate synthetase (Photobacterium profundum (strain SS9)).